A 480-amino-acid polypeptide reads, in one-letter code: Protein nucleotidyltransferase YdiU (480 aa).

ATP is bound by residues glycine 86, glycine 88, arginine 89, lysine 109, aspartate 121, glycine 122, arginine 172, and arginine 179. Aspartate 248 functions as the Proton acceptor in the catalytic mechanism. Asparagine 249 and aspartate 258 together coordinate Mg(2+). Aspartate 258 is an ATP binding site.

This sequence belongs to the SELO family. Mg(2+) is required as a cofactor. Requires Mn(2+) as cofactor.

It carries out the reaction L-seryl-[protein] + ATP = 3-O-(5'-adenylyl)-L-seryl-[protein] + diphosphate. It catalyses the reaction L-threonyl-[protein] + ATP = 3-O-(5'-adenylyl)-L-threonyl-[protein] + diphosphate. The enzyme catalyses L-tyrosyl-[protein] + ATP = O-(5'-adenylyl)-L-tyrosyl-[protein] + diphosphate. The catalysed reaction is L-histidyl-[protein] + UTP = N(tele)-(5'-uridylyl)-L-histidyl-[protein] + diphosphate. It carries out the reaction L-seryl-[protein] + UTP = O-(5'-uridylyl)-L-seryl-[protein] + diphosphate. It catalyses the reaction L-tyrosyl-[protein] + UTP = O-(5'-uridylyl)-L-tyrosyl-[protein] + diphosphate. Nucleotidyltransferase involved in the post-translational modification of proteins. It can catalyze the addition of adenosine monophosphate (AMP) or uridine monophosphate (UMP) to a protein, resulting in modifications known as AMPylation and UMPylation. The polypeptide is Protein nucleotidyltransferase YdiU (Salmonella newport (strain SL254)).